A 334-amino-acid chain; its full sequence is Protein-methionine-sulfoxide reductase catalytic subunit MsrP (334 aa).

The segment at residues 1–44 (MKKIRPLTEADVTAESAFFMQRRQVLKALGISAAALSLPSTAQA) is a signal peptide (tat-type signal). Residues N88, 91–92 (YE), C146, T181, N233, R238, and 249–251 (GIK) each bind Mo-molybdopterin.

This sequence belongs to the MsrP family. In terms of assembly, heterodimer of a catalytic subunit (MsrP) and a heme-binding subunit (MsrQ). It depends on Mo-molybdopterin as a cofactor. Post-translationally, predicted to be exported by the Tat system. The position of the signal peptide cleavage has not been experimentally proven.

It is found in the periplasm. The enzyme catalyses L-methionyl-[protein] + a quinone + H2O = L-methionyl-(S)-S-oxide-[protein] + a quinol. It catalyses the reaction L-methionyl-[protein] + a quinone + H2O = L-methionyl-(R)-S-oxide-[protein] + a quinol. Functionally, part of the MsrPQ system that repairs oxidized periplasmic proteins containing methionine sulfoxide residues (Met-O), using respiratory chain electrons. Thus protects these proteins from oxidative-stress damage caused by reactive species of oxygen and chlorine generated by the host defense mechanisms. MsrPQ is essential for the maintenance of envelope integrity under bleach stress, rescuing a wide series of structurally unrelated periplasmic proteins from methionine oxidation, including the primary periplasmic chaperone SurA and the lipoprotein Pal. The catalytic subunit MsrP is non-stereospecific, being able to reduce both (R-) and (S-) diastereoisomers of methionine sulfoxide. This Salmonella dublin (strain CT_02021853) protein is Protein-methionine-sulfoxide reductase catalytic subunit MsrP.